A 249-amino-acid chain; its full sequence is 2,3-bisphosphoglycerate-dependent phosphoglycerate mutase (249 aa).

Residues 8 to 15 (RHGESVWN), 21 to 22 (TG), arginine 60, 87 to 90 (ERHY), lysine 98, 114 to 115 (RR), and 183 to 184 (GN) contribute to the substrate site. Residue histidine 9 is the Tele-phosphohistidine intermediate of the active site. The active-site Proton donor/acceptor is glutamate 87.

This sequence belongs to the phosphoglycerate mutase family. BPG-dependent PGAM subfamily.

The enzyme catalyses (2R)-2-phosphoglycerate = (2R)-3-phosphoglycerate. It participates in carbohydrate degradation; glycolysis; pyruvate from D-glyceraldehyde 3-phosphate: step 3/5. Its function is as follows. Catalyzes the interconversion of 2-phosphoglycerate and 3-phosphoglycerate. The protein is 2,3-bisphosphoglycerate-dependent phosphoglycerate mutase of Endomicrobium trichonymphae.